The sequence spans 1139 residues: Ras GTPase-activating protein nGAP (1139 aa).

Positions 1-87 (MQTPEVPAER…SRGLPKLKES (87 aa)) are disordered. Serine 16 is modified (phosphoserine). The span at 17 to 36 (ISGTSTSEKPNSMDTANTSP) shows a compositional bias: polar residues. Residues 41–158 (GFFSKRLKGS…WMENLRRTVQ (118 aa)) form the PH domain. Positions 45–56 (KRLKGSIKRTKS) are enriched in basic residues. Over residues 73–87 (STDDRSRGLPKLKES) the composition is skewed to basic and acidic residues. Phosphoserine is present on serine 89. The 119-residue stretch at 149–267 (WMENLRRTVQ…TGRQFVEKWY (119 aa)) folds into the C2 domain. Positions 343–551 (GRAKDFLTDL…GGMKRFLLEI (209 aa)) constitute a Ras-GAP domain. Phosphothreonine is present on threonine 620. Position 663 is a phosphoserine (serine 663). Disordered regions lie at residues 684-704 (ASSQ…LPNG), 751-782 (ETQS…LSFQ), 803-869 (SLEN…GQAQ), 910-953 (EPVQ…SATM), and 1116-1139 (NGIS…NSSC). 2 stretches are compositionally biased toward polar residues: residues 751–760 (ETQSTPQSAP) and 803–818 (SLEN…QSNS). Residues 833–855 (DFTKRSTQSEDFSRRHTVPDRHI) show a composition bias toward basic and acidic residues. At serine 864 the chain carries Phosphoserine. The segment covering 916–928 (SRSRQQSSSSRES) has biased composition (low complexity).

In terms of assembly, interacts with PEAK1.

Inhibitory regulator of the Ras-cyclic AMP pathway. This chain is Ras GTPase-activating protein nGAP (RASAL2), found in Homo sapiens (Human).